Here is a 34-residue protein sequence, read N- to C-terminus: GASCDCHPFKGTYWFGTSNCPSGHGYRKKCDSFF.

An intrachain disulfide couples cysteine 6 to cysteine 30.

Highly expressed by the mesenteries. Moderately expressed by the pharynx. Weakly expressed by the gonad and pedal disk. No expression in tentacle.

The protein resides in the secreted. The protein localises to the nematocyst. Its function is as follows. Peptide with both antimicrobial and neurotoxin activities. Cationic AMP with antimicrobial activity against both Gram-positive bacteria (B.subtilis) and Gram-negative bacteria (E.coli and S.enterica). Shows no significant antimicrobial activity against bacteria S.aureus and P.aeruginosa, as well as the fungus C.albicans. In vivo, induces reversible paralytic activity towards the shrimp P.paucidens. May act by impairing sodium or potassium channels in the prey. The polypeptide is Crassicorin-II (Urticina crassicornis (Mottled anemone)).